Here is a 146-residue protein sequence, read N- to C-terminus: Probable calcium-binding protein CML32 (146 aa).

4 EF-hand domains span residues 1–33 (MSVA…FSPS), 34–69 (ITSE…GGEG), 73–108 (DEDI…LGEK), and 109–144 (QTIA…NNKK). Ca(2+) is bound by residues Asp-11, Asn-13, Asp-15, Lys-17, Glu-22, Asp-47, Asp-49, Asp-51, Gln-53, Glu-58, Asp-86, Asp-88, Asp-90, Lys-92, Glu-97, Asp-122, Asp-124, Asp-126, and Glu-133.

In terms of biological role, potential calcium sensor. This Arabidopsis thaliana (Mouse-ear cress) protein is Probable calcium-binding protein CML32 (CML32).